The sequence spans 251 residues: Octanoyltransferase (251 aa).

The 186-residue stretch at 56 to 241 (ADTGDEIWVV…NLDGASAAAD (186 aa)) folds into the BPL/LPL catalytic domain. Substrate-binding positions include 96–103 (RGGQITYH), 168–170 (ALG), and 181–183 (GLS). Cysteine 199 (acyl-thioester intermediate) is an active-site residue.

The protein belongs to the LipB family.

It is found in the cytoplasm. It carries out the reaction octanoyl-[ACP] + L-lysyl-[protein] = N(6)-octanoyl-L-lysyl-[protein] + holo-[ACP] + H(+). Its pathway is protein modification; protein lipoylation via endogenous pathway; protein N(6)-(lipoyl)lysine from octanoyl-[acyl-carrier-protein]: step 1/2. Functionally, catalyzes the transfer of endogenously produced octanoic acid from octanoyl-acyl-carrier-protein onto the lipoyl domains of lipoate-dependent enzymes. Lipoyl-ACP can also act as a substrate although octanoyl-ACP is likely to be the physiological substrate. In Burkholderia cenocepacia (strain HI2424), this protein is Octanoyltransferase.